The chain runs to 629 residues: G1-specific transcription factors activator MSA1 (629 aa).

Residues 1-11 (MDKSMIKKRGR) show a composition bias toward basic residues. Disordered stretches follow at residues 1–60 (MDKS…KRRL), 83–106 (STPT…NDSY), 217–286 (YCDT…SSLQ), 455–485 (VQVQ…NMNS), and 586–629 (PNLH…IDDQ). The span at 21–37 (PLQSPMAHSSMQVQKQG) shows a compositional bias: polar residues. The segment covering 245 to 260 (IETSASPIGSARNNNI) has biased composition (polar residues). 2 stretches are compositionally biased toward low complexity: residues 261–277 (LLSQ…QLKP) and 455–475 (VQVQ…RQFQ). S268 carries the post-translational modification Phosphoserine. The segment covering 614–629 (KQDDARTALKRLIDDQ) has biased composition (basic and acidic residues).

As to quaternary structure, interacts with transcription complexes SCB-binding factor (SBF) and MCB-binding factor (MBF) at their target promoters. Interacts with MBP1 and SWI6. In terms of processing, phosphorylated by CDC28.

Functionally, activator of G1-specific transcription factors, MBF and SBF. Promotes both the timing of G1-specific gene transcription and cell cycle initiation. Associates with SBF- and MBF-regulated target promoters and this binding is maximal during the G1 phase, prior to maximum budding. Affects cell cycle initiation by advancing the timing of transcription of G1-specific genes. Overexpression advances the timing of SBF-dependent transcription and budding. Depletion delays both indicators of cell cycle initiation. This chain is G1-specific transcription factors activator MSA1 (MSA1), found in Saccharomyces cerevisiae (strain ATCC 204508 / S288c) (Baker's yeast).